A 305-amino-acid polypeptide reads, in one-letter code: Beta-lactamase (305 aa).

Residues 1-34 (MGTTGARPSRRAVLTAAAGAAVAGIPLGGSTAFA) constitute a signal peptide (tat-type signal). Residue Ser82 is the Acyl-ester intermediate of the active site. Residue 250–252 (KTG) coordinates substrate.

The protein belongs to the class-A beta-lactamase family. In terms of processing, predicted to be exported by the Tat system. The position of the signal peptide cleavage has not been experimentally proven.

It carries out the reaction a beta-lactam + H2O = a substituted beta-amino acid. The polypeptide is Beta-lactamase (Streptomyces lavendulae).